The primary structure comprises 660 residues: Bifunctional polymyxin resistance protein ArnA (660 aa).

The interval 1–304 (MKAVIFAYHD…TLGLVAGARL (304 aa)) is formyltransferase ArnAFT. Residue His-104 is the Proton donor; for formyltransferase activity of the active site. Residues Arg-114 and 136–140 (VKRAD) each bind (6R)-10-formyltetrahydrofolate. A dehydrogenase ArnADH region spans residues 314–660 (RRIRVLILGV…RSVDVAERAS (347 aa)). Residues Asp-347 and 368-369 (DI) each bind NAD(+). Residues Ala-393, Tyr-398, and 432 to 433 (TS) each bind UDP-alpha-D-glucuronate. Residue Glu-434 is the Proton acceptor; for decarboxylase activity of the active site. Residues Arg-460, Asn-492, 526–535 (KLIDGGQQKR), and Tyr-613 contribute to the UDP-alpha-D-glucuronate site. Arg-619 acts as the Proton donor; for decarboxylase activity in catalysis.

This sequence in the N-terminal section; belongs to the Fmt family. UDP-L-Ara4N formyltransferase subfamily. The protein in the C-terminal section; belongs to the NAD(P)-dependent epimerase/dehydratase family. UDP-glucuronic acid decarboxylase subfamily. In terms of assembly, homohexamer, formed by a dimer of trimers.

The catalysed reaction is UDP-alpha-D-glucuronate + NAD(+) = UDP-beta-L-threo-pentopyranos-4-ulose + CO2 + NADH. It carries out the reaction UDP-4-amino-4-deoxy-beta-L-arabinose + (6R)-10-formyltetrahydrofolate = UDP-4-deoxy-4-formamido-beta-L-arabinose + (6S)-5,6,7,8-tetrahydrofolate + H(+). Its pathway is nucleotide-sugar biosynthesis; UDP-4-deoxy-4-formamido-beta-L-arabinose biosynthesis; UDP-4-deoxy-4-formamido-beta-L-arabinose from UDP-alpha-D-glucuronate: step 1/3. The protein operates within nucleotide-sugar biosynthesis; UDP-4-deoxy-4-formamido-beta-L-arabinose biosynthesis; UDP-4-deoxy-4-formamido-beta-L-arabinose from UDP-alpha-D-glucuronate: step 3/3. It participates in bacterial outer membrane biogenesis; lipopolysaccharide biosynthesis. Its function is as follows. Bifunctional enzyme that catalyzes the oxidative decarboxylation of UDP-glucuronic acid (UDP-GlcUA) to UDP-4-keto-arabinose (UDP-Ara4O) and the addition of a formyl group to UDP-4-amino-4-deoxy-L-arabinose (UDP-L-Ara4N) to form UDP-L-4-formamido-arabinose (UDP-L-Ara4FN). The modified arabinose is attached to lipid A and is required for resistance to polymyxin and cationic antimicrobial peptides. The sequence is that of Bifunctional polymyxin resistance protein ArnA from Salmonella dublin (strain CT_02021853).